We begin with the raw amino-acid sequence, 222 residues long: Cytochrome b6 (222 aa).

A helical transmembrane segment spans residues 39 to 59 (IFYCLGGITLVCFLIQFATGF). C42 serves as a coordination point for heme c. The heme b site is built by H93 and H107. Helical transmembrane passes span 97-117 (ASMM…TGGF), 123-143 (LTWV…VTGY), and 193-213 (LHTF…FLMI). Heme b is bound by residues H194 and H209.

This sequence belongs to the cytochrome b family. PetB subfamily. As to quaternary structure, the 4 large subunits of the cytochrome b6-f complex are cytochrome b6, subunit IV (17 kDa polypeptide, PetD), cytochrome f and the Rieske protein, while the 4 small subunits are PetG, PetL, PetM and PetN. The complex functions as a dimer. Heme b is required as a cofactor. Heme c serves as cofactor.

The protein resides in the cellular thylakoid membrane. Functionally, component of the cytochrome b6-f complex, which mediates electron transfer between photosystem II (PSII) and photosystem I (PSI), cyclic electron flow around PSI, and state transitions. The polypeptide is Cytochrome b6 (Trichodesmium erythraeum (strain IMS101)).